Here is a 442-residue protein sequence, read N- to C-terminus: D-aminoacyl-tRNA deacylase (442 aa).

This sequence belongs to the DtdA deacylase family. As to quaternary structure, monomer. It depends on Zn(2+) as a cofactor.

The enzyme catalyses a D-aminoacyl-tRNA + H2O = a tRNA + a D-alpha-amino acid + H(+). The catalysed reaction is glycyl-tRNA(Ala) + H2O = tRNA(Ala) + glycine + H(+). D-aminoacyl-tRNA deacylase with broad substrate specificity. By recycling D-aminoacyl-tRNA to D-amino acids and free tRNA molecules, this enzyme counteracts the toxicity associated with the formation of D-aminoacyl-tRNA entities in vivo. This chain is D-aminoacyl-tRNA deacylase, found in Methanospirillum hungatei JF-1 (strain ATCC 27890 / DSM 864 / NBRC 100397 / JF-1).